A 129-amino-acid chain; its full sequence is Small ribosomal subunit protein uS11 (129 aa).

Belongs to the universal ribosomal protein uS11 family. Part of the 30S ribosomal subunit. Interacts with proteins S7 and S18. Binds to IF-3.

Functionally, located on the platform of the 30S subunit, it bridges several disparate RNA helices of the 16S rRNA. Forms part of the Shine-Dalgarno cleft in the 70S ribosome. The sequence is that of Small ribosomal subunit protein uS11 from Histophilus somni (strain 129Pt) (Haemophilus somnus).